A 477-amino-acid chain; its full sequence is Peroxisome proliferator-activated receptor gamma (477 aa).

S87 bears the Phosphoserine; by MAPK mark. Residues 110-184 (AIECRVCGDK…VGMSHNAIRF (75 aa)) constitute a DNA-binding region (nuclear receptor). 2 NR C4-type zinc fingers span residues 113–133 (CRVC…CEGC) and 150–172 (CDLN…FQKC). The tract at residues 231–281 (TKAKAPGHPDGQSHRQNSRGYTRHELADDGGGSDQGAVREPRAEQGGGDSN) is disordered. The NR LBD domain occupies 252-475 (TRHELADDGG…HPLLQEIYKD (224 aa)). The 9aaTAD motif lies at 467–475 (PLLQEIYKD).

It belongs to the nuclear hormone receptor family. NR1 subfamily. As to quaternary structure, heterodimer with the retinoid X receptor. As to expression, expressed mainly in adipose tissue and kidney.

It is found in the nucleus. The protein resides in the cytoplasm. Functionally, receptor that binds peroxisome proliferators such as hypolipidemic drugs and fatty acids. Once activated by a ligand, the receptor binds to a promoter element in the gene for acyl-CoA oxidase and activates its transcription. It therefore controls the peroxisomal beta-oxidation pathway of fatty acids. Key regulator of adipocyte differentiation and glucose homeostasis. May play a role in the regulation of circadian rhythm. This is Peroxisome proliferator-activated receptor gamma (pparg) from Xenopus laevis (African clawed frog).